A 324-amino-acid chain; its full sequence is MDGNAPEPRYWEKMRLVAEVLKAVEGPIYIATHVDPDGDAIGSSLGLYRALKALGKEAYWVADPPRFLRFLPKEEEYSDPVEKLPPGATLVALDSAEPSRVVGVPVEGFVINIDHHGTNPRFGHLHVVDPSKAATAQMVKDLIDLLGVEWTAEIATPVLTGILTDTGNFRFANTTPEVLRVAAELLGYGVKLAELTDRLQFRPPSYFRLMGQVLSTVAFHFGGLLVTAHLPEDAGAEEDSDDFVGLIRYVEGSVVSVFLRKREEGVKVSIRSRGGVSAQNIALKLGGGGHVPAAGATLKGLDLDQAYERVLEAVREELTRAGYL.

It belongs to the NrnA oligoribonuclease family. In terms of assembly, oligomeric. The cofactor is Co(2+). Mn(2+) serves as cofactor. It depends on Zn(2+) as a cofactor. Requires Mg(2+) as cofactor.

It catalyses the reaction adenosine 3',5'-bisphosphate + H2O = AMP + phosphate. Bifunctional enzyme which has both oligoribonuclease and pAp-phosphatase activities. Degrades short RNA and DNA oligonucleotides with a length of up to 33 nucleotides, although the enzyme is most active on shorter substrates, in a 5' to 3' direction. Converts 3'(2')-phosphoadenosine 5'-phosphate (PAP) to AMP, has very low activity on cAMP and cGMP. This Thermus thermophilus (strain ATCC 27634 / DSM 579 / HB8) protein is Bifunctional oligoribonuclease and PAP phosphatase NrnA (nrnA).